The sequence spans 96 residues: Co-chaperonin GroES (96 aa).

This sequence belongs to the GroES chaperonin family. Heptamer of 7 subunits arranged in a ring. Interacts with the chaperonin GroEL.

Its subcellular location is the cytoplasm. In terms of biological role, together with the chaperonin GroEL, plays an essential role in assisting protein folding. The GroEL-GroES system forms a nano-cage that allows encapsulation of the non-native substrate proteins and provides a physical environment optimized to promote and accelerate protein folding. GroES binds to the apical surface of the GroEL ring, thereby capping the opening of the GroEL channel. The protein is Co-chaperonin GroES of Shewanella frigidimarina (strain NCIMB 400).